The primary structure comprises 190 residues: Scytalone dehydratase-like protein Arp1 (190 aa).

Y67 is a binding site for substrate. Active-site residues include H102 and H127. Residue N148 coordinates substrate.

This sequence belongs to the scytalone dehydratase family. As to quaternary structure, homotrimer. Each subunit contains an active site, located in the central part of the hydrophobic core of the monomer, which functions independently.

Scytalone dehydratase-like protein; part of the Pks2 gene cluster that mediates the formation of infectious structures (appressoria), enabling these fungi to kill insects faster. The product of the Pks2 gene cluster is different from the one of Pks1 and has still not been identified. The chain is Scytalone dehydratase-like protein Arp1 from Metarhizium anisopliae (strain ARSEF 549).